Here is a 103-residue protein sequence, read N- to C-terminus: Protein S100-A16 (103 aa).

The 36-residue stretch at 12–47 (VIVLVENFYKYVSKYSLVKNKISKSSFREMLQKELN) folds into the EF-hand 1; degenerate domain. Residues 54 to 89 (GNRKAADKLIQNLDANHDGRISFDEYWTLIGGITGP) enclose the EF-hand 2 domain. Ca(2+) contacts are provided by aspartate 67, asparagine 69, aspartate 71, arginine 73, and glutamate 78.

Belongs to the S-100 family. In terms of assembly, homodimer. Interacts with TP53. Ubiquitous. Highly expressed in esophagus, adipose tissues and colon. Expressed at lower level in lung, brain, pancreas and skeletal muscle. Expression is up-regulated in tumors of bladder, lung, thyroid gland, pancreas and ovary. Expressed in astrocytes.

Its subcellular location is the nucleus. It is found in the nucleolus. The protein resides in the cytoplasm. In terms of biological role, calcium-binding protein. Binds one calcium ion per monomer. Can promote differentiation of adipocytes (in vitro). Overexpression in preadipocytes increases their proliferation, enhances adipogenesis and reduces insulin-stimulated glucose uptake. The chain is Protein S100-A16 from Homo sapiens (Human).